The sequence spans 190 residues: MLEILKRSLYDAPVFKRGDYNYFIHPITDGVPETRPELIREVVCHIIRIADLDVDKIVTVEAMGIPIGGALSLVTDIPLVIIRKKMYGLPGEIEVSQVTGYSKSKIYLNGIKKGDRVIFVDDVVSTGGTAIAVMKALEAAGAVIRDAVVVIERGAGAERVRSAGYPLKTMVKVDVDEKRVFRVEEVSFRS.

The protein belongs to the purine/pyrimidine phosphoribosyltransferase family. Archaeal HPRT subfamily. Homodimer.

It localises to the cytoplasm. The catalysed reaction is IMP + diphosphate = hypoxanthine + 5-phospho-alpha-D-ribose 1-diphosphate. It carries out the reaction GMP + diphosphate = guanine + 5-phospho-alpha-D-ribose 1-diphosphate. The protein operates within purine metabolism; IMP biosynthesis via salvage pathway; IMP from hypoxanthine: step 1/1. In terms of biological role, catalyzes a salvage reaction resulting in the formation of IMP that is energically less costly than de novo synthesis. The sequence is that of Hypoxanthine/guanine phosphoribosyltransferase from Methanothrix thermoacetophila (strain DSM 6194 / JCM 14653 / NBRC 101360 / PT) (Methanosaeta thermophila).